The chain runs to 92 residues: Small ribosomal subunit protein uS19 (92 aa).

This sequence belongs to the universal ribosomal protein uS19 family.

Its function is as follows. Protein S19 forms a complex with S13 that binds strongly to the 16S ribosomal RNA. This Photorhabdus laumondii subsp. laumondii (strain DSM 15139 / CIP 105565 / TT01) (Photorhabdus luminescens subsp. laumondii) protein is Small ribosomal subunit protein uS19.